The chain runs to 330 residues: MATTKISSTKSTSRAINYAEKRAEEKSALNCDIDYAKSSFKATREMYGKTDGNEGHVVIQSFKPNEVTPEQCNQLGLELAEKIAPNHQVAVYTHNDTDHVHNHIVINSIDLETGKKFNNNKKALHDIRQANDEICVSHNLSIPEEKAKLRYTQAEYSVLNKGKTSWKDEIRHAIDQSQAASYEELGNDLQQNGIKIERITDKTITYRHLEEDKKVRGKKLGEDYDKGGLEIGFNRQNEQREEQARQRELEQARREKIKRDKEREKEWARFNRSTQAIRQNRERSEREERERERKARELEEQNRRAREERARQERENKHTHEKTRGFDLEL.

Residues 220–330 form a disordered region; the sequence is LGEDYDKGGL…EKTRGFDLEL (111 aa). Composition is skewed to basic and acidic residues over residues 237-269 and 279-330; these read NEQR…EWAR and QNRE…DLEL.

Functionally, this protein is probably required for relaxation complex formation and plasmid mobilization by conjugative plasmids. The protein is Protein rlx (rlx) of Staphylococcus aureus.